Reading from the N-terminus, the 158-residue chain is Retinoic acid receptor beta (158 aa).

Over residues 1-18 the composition is skewed to low complexity; sequence RHSAQSIETQSTSSEELV. The segment at 1–24 is disordered; the sequence is RHSAQSIETQSTSSEELVPSPPSP. The nuclear receptor DNA-binding region spans 31-106; that stretch reads YKPCFVCQDK…VGMSKESVRN (76 aa). NR C4-type zinc fingers lie at residues 34 to 54 and 70 to 94; these read CFVCQDKSSGYHYGVSACEGC and CHRDKNCVINKVTRNRCQYCRLQRC. The 30-residue stretch at 129-158 folds into the NR LBD domain; the sequence is ELDDLTEKIRKAHQETFPSLCQLGKYTTNS.

The protein belongs to the nuclear hormone receptor family. NR1 subfamily. Heterodimer; with a RXR molecule. Binds DNA preferentially as a RAR/RXR heterodimer.

The protein localises to the nucleus. Receptor for retinoic acid. Retinoic acid receptors bind as heterodimers to their target response elements in response to their ligands, all-trans or 9-cis retinoic acid, and regulate gene expression in various biological processes. The RAR/RXR heterodimers bind to the retinoic acid response elements (RARE) composed of tandem 5'-AGGTCA-3' sites known as DR1-DR5. This is Retinoic acid receptor beta (RARB) from Notophthalmus viridescens (Eastern newt).